Consider the following 585-residue polypeptide: Mycosin-5 (585 aa).

Positions 1-39 are cleaved as a signal peptide; it reads MQRFGTGSSRSWCGRAGTATIAAVLLASGALTGLPPAYA. Residues 83-521 form the Peptidase S8 domain; sequence PKYMEMLNLN…YGVVDPVAAL (439 aa). Residues aspartate 109 and histidine 141 each act as charge relay system in the active site. The segment covering 163–173 has biased composition (low complexity); the sequence is VPRRPVTIPTT. The disordered stretch occupies residues 163-269; it reads VPRRPVTIPT…PALGPPPDAF (107 aa). Composition is skewed to pro residues over residues 196 to 224 and 252 to 267; these read PAPP…PQPP and NPHP…PPPD. The active-site Charge relay system is the serine 466. The helical transmembrane segment at 552–572 threads the bilayer; it reads VPIWVAAGGLAGALLIGGAVF.

It belongs to the peptidase S8 family.

Its subcellular location is the cell membrane. The polypeptide is Mycosin-5 (Mycobacterium tuberculosis (strain ATCC 25618 / H37Rv)).